Consider the following 760-residue polypeptide: Protein HEADING DATE 3B (760 aa).

Gly residues-rich tracts occupy residues 1–12 and 60–70; these read MATRGGGGGGGG and SGGGGGGGVGG. Disordered stretches follow at residues 1–120, 144–169, 236–262, and 285–346; these read MATR…KINK, SRST…RLAD, VKSR…EKSS, and TGII…IEET. Low complexity predominate over residues 71 to 87; the sequence is SPAHSTSAASQSQSQSQ. Positions 94 to 107 are enriched in polar residues; it reads SLFQPFNVPSNRPG. Positions 108-120 are enriched in basic and acidic residues; sequence HSTEKINSDKINK. Over residues 236–248 the composition is skewed to basic and acidic residues; the sequence is VKSRTPLKDKEME. The Nuclear localization signal signature appears at 349–355; it reads KRKRLLE. Disordered regions lie at residues 485-543 and 707-760; these read LQQP…GVQL and FPTV…QRDD. 3 stretches are compositionally biased toward polar residues: residues 511-522, 531-543, and 707-730; these read QRDQAATNGVSK, ASDN…GVQL, and FPTV…QTNV.

In terms of tissue distribution, expressed in mesophyll cells of young leaves, anthers, stigmas and the top of lemmas.

It is found in the nucleus. Involved in the regulation of flowering time under short day (SD) and long day (LD) conditions. Functions as a floral promoter by negatively regulating GHD7, a repressor of the photoperiodic control of flowering. Acts as a floral activator in the LD photoperiodic pathway. Involved in blue light-induced activation of EHD1 expression to promote flowering under SD conditions. In Oryza sativa subsp. japonica (Rice), this protein is Protein HEADING DATE 3B (HD3B).